The following is a 750-amino-acid chain: Cullin-5 (750 aa).

The Cullin neddylation domain maps to 678 to 739; sequence RFFKLQAAIV…QEYIRRTTDD (62 aa). K691 is covalently cross-linked (Glycyl lysine isopeptide (Lys-Gly) (interchain with G-Cter in NEDD8)).

This sequence belongs to the cullin family. Post-translationally, neddylated; which enhances the ubiquitination activity of SCF-like complex.

It functions in the pathway protein modification; protein ubiquitination. In terms of biological role, probable core component of cullin-based SCF-like E3 ubiquitin-protein ligase complexes which mediate the ubiquitination and subsequent proteasomal degradation of target proteins. The E3 ubiquitin-protein ligase activity of the complex is dependent on the neddylation of the cullin subunit. In Dictyostelium discoideum (Social amoeba), this protein is Cullin-5 (culE).